The chain runs to 206 residues: Small ribosomal subunit protein uS4 (206 aa).

The S4 RNA-binding domain maps to 96–157 (QRLDNVVYRM…KAKKQARIGA (62 aa)).

The protein belongs to the universal ribosomal protein uS4 family. As to quaternary structure, part of the 30S ribosomal subunit. Contacts protein S5. The interaction surface between S4 and S5 is involved in control of translational fidelity.

One of the primary rRNA binding proteins, it binds directly to 16S rRNA where it nucleates assembly of the body of the 30S subunit. Its function is as follows. With S5 and S12 plays an important role in translational accuracy. This chain is Small ribosomal subunit protein uS4, found in Idiomarina loihiensis (strain ATCC BAA-735 / DSM 15497 / L2-TR).